A 689-amino-acid chain; its full sequence is MNFENLLIEVGTEELPPKSLRKLAESFLANFTEELTKAELSFDSAVWHASPRRLAICINQLALAQADKVVEKRGPAIAQAFDADGNPTKAAQGWARGNGISVEQAERLKTDKGEWLLHQARVVGVETKSLIADMAQRSLDKLPIPKPMRWGSNTTQFIRPVHTVTMLLGSEVVEGELLGIKSDRVIRGHRFMGESSFELDHADNYLVALKEKGKVLADYQARKAIIKTDAEAAAAKIGGVADLEDDLLEEVTSLVEWPVVLTASFEEKFLDVPAEALVYTMKGDQKYFPVFDNAGQLLPNFIFVTNIESKDPQQIISGNEKVVRPRLADAEFFFETDKKESLEARLASLETVVFQKQLGTIKQRVERISALAGYIATSINANSEEAARAGLLSKSDLMTNMVMEFTDLQGTMGMHYARLNGETEAVAVALAEQYKPKFSGDTVPTAPISICVALAEKLDTLVGIFGIGQAPKGAADPFALRRAAIGVLRICLENNLPLDLVDLIAKAQELHGENLTNENVAEQVLEFFMGRFRAWYQDQGVSVDVILAVLARRPTAPADFESRIKAVAHFRTLEQASALAAANKRVSNILAKVEGELPAAIDDKLLVEEAEKALAAKLAELQPQLAPLFAAANYQEALALLASLRESVDTFFEDVMVMADDEALKNNRLALLSSLREQFLHAADISLLQ.

It belongs to the class-II aminoacyl-tRNA synthetase family. As to quaternary structure, tetramer of two alpha and two beta subunits.

It is found in the cytoplasm. It catalyses the reaction tRNA(Gly) + glycine + ATP = glycyl-tRNA(Gly) + AMP + diphosphate. This chain is Glycine--tRNA ligase beta subunit, found in Shewanella halifaxensis (strain HAW-EB4).